A 757-amino-acid chain; its full sequence is Polyribonucleotide nucleotidyltransferase (757 aa).

Mg(2+)-binding residues include Asp532 and Asp538. Residues 598–657 form the KH domain; it reads PRVTAIKVPVDKIGEVIGPKGKMINSITEQTGANISIEDDGTVFVGATDGPSAQAAIDMI. One can recognise an S1 motif domain in the interval 669–738; it reads GERFLGTVVK…NRGKISLIPV (70 aa).

The protein belongs to the polyribonucleotide nucleotidyltransferase family. It depends on Mg(2+) as a cofactor.

The protein localises to the cytoplasm. The catalysed reaction is RNA(n+1) + phosphate = RNA(n) + a ribonucleoside 5'-diphosphate. Involved in mRNA degradation. Catalyzes the phosphorolysis of single-stranded polyribonucleotides processively in the 3'- to 5'-direction. This chain is Polyribonucleotide nucleotidyltransferase, found in Rhodococcus jostii (strain RHA1).